We begin with the raw amino-acid sequence, 271 residues long: DNA repair protein RecO (271 aa).

Residues 248-271 are disordered; that stretch reads AVGVEDSVRQDGDRDSTTRTPSSA. Basic and acidic residues predominate over residues 253–264; sequence DSVRQDGDRDST.

This sequence belongs to the RecO family.

In terms of biological role, involved in DNA repair and RecF pathway recombination. The sequence is that of DNA repair protein RecO from Rhodococcus opacus (strain B4).